The chain runs to 296 residues: Transcription factor MYB72 (296 aa).

2 HTH myb-type domains span residues 11–63 and 64–118; these read KNKV…INYL and RPDV…KKRL. 2 consecutive DNA-binding regions (H-T-H motif) follow at residues 39–63 and 91–114; these read WRSL…INYL and WSKI…NTHL. The interval 118-144 is disordered; that stretch reads LTPSSSSSSLSSTHDQSTKADHDKNCD. A compositionally biased stretch (basic and acidic residues) spans 133–144; that stretch reads QSTKADHDKNCD.

As to quaternary structure, interacts with EIL3.

Its subcellular location is the nucleus. Involved in metal ions homeostasis, including iron ions (Fe) acquisition, via the regulation of NAS4 and NAS2 genes expression. Necessary for plant survival in alkaline soil where iron availability is greatly restricted. Involved in the up-regulation of several biosynthesis genes of secondary metabolites involved in iron uptake under conditions of iron deficiency. Triggers tolerance to nickel (Ni) and zinc (Zn) ions. Required in the roots during early signaling steps of rhizobacteria-mediated (e.g. P.fluorescens WCS417r) and beneficial fungi-mediated (e.g. T.asperellum T34) broad-spectrum induced systemic resistance (ISR) against several pathogens (e.g. P.syringae pv tomato, H.parasitica, P.cucumerina, A.brassicicola and B.cinerea) and implying enhanced callose deposition. Required for the induction of some genes (e.g. BGLU42) upon rhizobacteria-mediated ISR. This is Transcription factor MYB72 from Arabidopsis thaliana (Mouse-ear cress).